A 156-amino-acid chain; its full sequence is 6,7-dimethyl-8-ribityllumazine synthase (156 aa).

5-amino-6-(D-ribitylamino)uracil is bound by residues phenylalanine 25, 59–61 (AWE), and 83–85 (AVI). (2S)-2-hydroxy-3-oxobutyl phosphate is bound at residue 88 to 89 (ST). Residue histidine 91 is the Proton donor of the active site. Residue asparagine 116 participates in 5-amino-6-(D-ribitylamino)uracil binding. Arginine 130 contacts (2S)-2-hydroxy-3-oxobutyl phosphate.

It belongs to the DMRL synthase family. Forms an icosahedral capsid composed of 60 subunits, arranged as a dodecamer of pentamers.

The catalysed reaction is (2S)-2-hydroxy-3-oxobutyl phosphate + 5-amino-6-(D-ribitylamino)uracil = 6,7-dimethyl-8-(1-D-ribityl)lumazine + phosphate + 2 H2O + H(+). The protein operates within cofactor biosynthesis; riboflavin biosynthesis; riboflavin from 2-hydroxy-3-oxobutyl phosphate and 5-amino-6-(D-ribitylamino)uracil: step 1/2. Functionally, catalyzes the formation of 6,7-dimethyl-8-ribityllumazine by condensation of 5-amino-6-(D-ribitylamino)uracil with 3,4-dihydroxy-2-butanone 4-phosphate. This is the penultimate step in the biosynthesis of riboflavin. The protein is 6,7-dimethyl-8-ribityllumazine synthase of Acinetobacter baumannii (strain AB0057).